Reading from the N-terminus, the 491-residue chain is Probable CtpA-like serine protease (491 aa).

The interval 1–22 (MNDHQKNHATSQDDNTKSTPSK) is disordered. Positions 8–22 (HATSQDDNTKSTPSK) are enriched in polar residues. The helical transmembrane segment at 31-51 (LWHFILVILGIILLTSIITVV) threads the bilayer. A PDZ domain is found at 119-201 (TKQFNEGVSG…TYVTLTIKRG (83 aa)). Residues Ser324, Asp335, and Lys349 each act as charge relay system in the active site.

This sequence belongs to the peptidase S41A family.

Its subcellular location is the cell membrane. The chain is Probable CtpA-like serine protease from Staphylococcus epidermidis (strain ATCC 12228 / FDA PCI 1200).